Reading from the N-terminus, the 308-residue chain is MTTTNKKTRYSAIKPSERLPEWIKPSLGTASQLEKVQNLVKEYRLNTICEEGRCPNRGECYASGTATFLLGGSICTRSCAFCQVEKGMPPQNIDPNESIRVAKAVLKLQLKYVVLTSVARDDLDDHGAIHFSRTIHAIRKTSPTTSIEVLTPDFWGGCIDKIKATKIQRERLKIVLKAKPVCFNHNLETVERLQKEVRRGATYHRSLELLKASREIDNEIPTKSGLMLGLGERSDEIIQTLKDLRSVNCQQVTIGQYLRPSLAHIPVQKYWLPKDFEHFKRIAEGLGFKKVNSGPLVRSSYHAELPQT.

The [4Fe-4S] cluster site is built by cysteine 49, cysteine 54, cysteine 60, cysteine 75, cysteine 79, cysteine 82, and serine 300. One can recognise a Radical SAM core domain in the interval 61-289 (YASGTATFLL…KRIAEGLGFK (229 aa)).

The protein belongs to the radical SAM superfamily. Lipoyl synthase family. Requires [4Fe-4S] cluster as cofactor.

It localises to the cytoplasm. It carries out the reaction [[Fe-S] cluster scaffold protein carrying a second [4Fe-4S](2+) cluster] + N(6)-octanoyl-L-lysyl-[protein] + 2 oxidized [2Fe-2S]-[ferredoxin] + 2 S-adenosyl-L-methionine + 4 H(+) = [[Fe-S] cluster scaffold protein] + N(6)-[(R)-dihydrolipoyl]-L-lysyl-[protein] + 4 Fe(3+) + 2 hydrogen sulfide + 2 5'-deoxyadenosine + 2 L-methionine + 2 reduced [2Fe-2S]-[ferredoxin]. Its pathway is protein modification; protein lipoylation via endogenous pathway; protein N(6)-(lipoyl)lysine from octanoyl-[acyl-carrier-protein]: step 2/2. Catalyzes the radical-mediated insertion of two sulfur atoms into the C-6 and C-8 positions of the octanoyl moiety bound to the lipoyl domains of lipoate-dependent enzymes, thereby converting the octanoylated domains into lipoylated derivatives. The chain is Lipoyl synthase 2 from Prochlorococcus marinus (strain SARG / CCMP1375 / SS120).